The sequence spans 120 residues: Large ribosomal subunit protein bL19 (120 aa).

This sequence belongs to the bacterial ribosomal protein bL19 family.

Its function is as follows. This protein is located at the 30S-50S ribosomal subunit interface and may play a role in the structure and function of the aminoacyl-tRNA binding site. This is Large ribosomal subunit protein bL19 from Trichormus variabilis (strain ATCC 29413 / PCC 7937) (Anabaena variabilis).